We begin with the raw amino-acid sequence, 880 residues long: Pentatricopeptide repeat-containing protein At3g07290, mitochondrial (880 aa).

The N-terminal 89 residues, 1-89 (MLLIHIRSTR…RSDNDICVRF (89 aa)), are a transit peptide targeting the mitochondrion. 19 PPR repeats span residues 159–193 (NYPC…GFVV), 194–228 (GMID…GFVL), 229–259 (DSHI…MSKE), 265–299 (NSVS…GCQP), 300–334 (STRT…GCKP), 335–369 (NVHT…RIFP), 370–404 (SVIT…ACKP), 405–439 (NVRT…GLSP), 440–474 (DIVS…DIEP), 475–509 (DCLT…GISL), 510–544 (DEVT…RILT), 545–579 (TPHS…GLVP), 580–614 (SVVT…GCLP), 615–649 (NVYP…GVSP), 650–684 (NHVT…GYEL), 685–721 (NDRI…ETDP), 738–768 (ISGL…VLER), 772–806 (LEKA…GFVP), and 807–842 (SFKS…GVVE).

This sequence belongs to the PPR family. P subfamily.

The protein resides in the mitochondrion. The chain is Pentatricopeptide repeat-containing protein At3g07290, mitochondrial from Arabidopsis thaliana (Mouse-ear cress).